We begin with the raw amino-acid sequence, 426 residues long: Egl nine homolog 1 (426 aa).

N-acetylalanine is present on Ala2. Positions 6–20 (GGPGGPSPSERDRQY) are required for nuclear export. Ser12 carries the post-translational modification Phosphoserine. Zn(2+) is bound by residues Cys21, Cys24, Cys33, Cys36, Cys42, His46, His54, and Cys58. The MYND-type; atypical zinc-finger motif lies at 21 to 58 (CELCGKMENLLRCSRCRSSFYCCKEHQRQDWKKHKLVC). Disordered regions lie at residues 65-129 (LGHG…PCRA) and 160-184 (ANLY…PNGQ). Positions 77 to 87 (PAPPAAVPPPR) are enriched in pro residues. Basic and acidic residues predominate over residues 89-103 (GAREPRKAAARRDNA). Residues 120-129 (PAAAASPCRA) are compositionally biased toward low complexity. Ser125 is modified (phosphoserine). An S-nitrosocysteine mark is found at Cys201 and Cys208. The segment at 241-251 (VSQKSDSSKDI) is beta(2)beta(3) 'finger-like' loop. A Fe2OG dioxygenase domain is found at 291 to 392 (KINGRTKAMV…RYAITVWYFD (102 aa)). An S-nitrosocysteine modification is found at Cys302. His313 and Asp315 together coordinate Fe cation. 2 positions are modified to S-nitrosocysteine: Cys323 and Cys326. Residue His374 coordinates Fe cation. Arg383 lines the 2-oxoglutarate pocket.

In terms of assembly, monomer. Interacts with ING4; the interaction inhibits the hydroxylation of HIF alpha proteins. Interacts with PTGES3 (via PXLE motif); thereby recruiting EGLN1 to the HSP90 pathway to facilitate HIF alpha proteins hydroxylation. Interacts with LIMD1. Found in a complex composed of LIMD1, VHL, EGLN1/PHD2, ELOB and CUL2. Interacts with EPAS1. Interacts with CBFA2T3. Interacts with HIF1A. Fe(2+) serves as cofactor. L-ascorbate is required as a cofactor. S-nitrosylation inhibits the enzyme activity up to 60% under aerobic conditions. Chelation of Fe(2+) has no effect on the S-nitrosylation. It is uncertain whether nitrosylation occurs on Cys-323 or Cys-326. In terms of tissue distribution, according to PubMed:11056053, widely expressed with highest levels in skeletal muscle and heart, moderate levels in pancreas, brain (dopaminergic neurons of adult and fetal substantia nigra) and kidney, and lower levels in lung and liver. According to PubMed:12351678 widely expressed with highest levels in brain, kidney and adrenal gland. Expressed in cardiac myocytes, aortic endothelial cells and coronary artery smooth muscle. According to PubMed:12788921; expressed in adult and fetal heart, brain, liver, lung, skeletal muscle and kidney. Also expressed in placenta. Highest levels in adult heart, brain, lung and liver and fetal brain, heart spleen and skeletal muscle.

Its subcellular location is the cytoplasm. It is found in the nucleus. The enzyme catalyses L-prolyl-[hypoxia-inducible factor alpha subunit] + 2-oxoglutarate + O2 = trans-4-hydroxy-L-prolyl-[hypoxia-inducible factor alpha subunit] + succinate + CO2. With respect to regulation, following exposure to hypoxia, activated in HeLa cells but not in cardiovascular cells. Its function is as follows. Cellular oxygen sensor that catalyzes, under normoxic conditions, the post-translational formation of 4-hydroxyproline in hypoxia-inducible factor (HIF) alpha proteins. Hydroxylates a specific proline found in each of the oxygen-dependent degradation (ODD) domains (N-terminal, NODD, and C-terminal, CODD) of HIF1A. Also hydroxylates HIF2A. Has a preference for the CODD site for both HIF1A and HIF1B. Hydroxylated HIFs are then targeted for proteasomal degradation via the von Hippel-Lindau ubiquitination complex. Under hypoxic conditions, the hydroxylation reaction is attenuated allowing HIFs to escape degradation resulting in their translocation to the nucleus, heterodimerization with HIF1B, and increased expression of hypoxy-inducible genes. EGLN1 is the most important isozyme under normoxia and, through regulating the stability of HIF1, involved in various hypoxia-influenced processes such as angiogenesis in retinal and cardiac functionality. Target proteins are preferentially recognized via a LXXLAP motif. The chain is Egl nine homolog 1 from Homo sapiens (Human).